The primary structure comprises 97 residues: RxLR effector protein CRE10 (97 aa).

The N-terminal stretch at 1 to 21 (MRLSYILVVVIAVTLQACVCA) is a signal peptide. Positions 48–66 (RLLRGVKKRTAEREVQEER) match the RxLR-dEER motif.

This sequence belongs to the RxLR effector family.

It localises to the secreted. It is found in the host cell. Its function is as follows. Effector that is involved in host plant infection. Contributes to virulence during the early infection stage, by inhibiting plant defense responses induced by both PAMP-triggered immunity (PTI) and effector-triggered immunity (ETI). In Phytophthora infestans (strain T30-4) (Potato late blight agent), this protein is RxLR effector protein CRE10.